We begin with the raw amino-acid sequence, 970 residues long: Protein CLASP-3 (970 aa).

2 disordered regions span residues S314–R377 and N651–H675. The span at G344–N355 shows a compositional bias: polar residues. One copy of the HEAT repeat lies at I905–H943.

The protein belongs to the CLASP family.

Its subcellular location is the cytoplasm. It is found in the cytoskeleton. Functionally, microtubule plus-end tracking protein that promotes the stabilization of dynamic microtubules. The protein is Protein CLASP-3 (cls-3) of Caenorhabditis briggsae.